Here is a 425-residue protein sequence, read N- to C-terminus: Sodium-dependent glucose transporter 1A (425 aa).

A run of 11 helical transmembrane segments spans residues 35–55 (LIFV…GVLF), 61–81 (FFLL…IPFC), 84–104 (AVLL…VDTG), 123–143 (ALHF…KLAW), 183–203 (WAYA…FGLF), 228–248 (ALLC…ITYG), 271–291 (SIFW…ATFL), 294–314 (GTMI…LVLF), 320–340 (CLWI…PSGI), 355–375 (AFFV…IGIL), and 382–402 (LPVV…LFPV).

Belongs to the major facilitator superfamily.

The protein resides in the apical cell membrane. In terms of biological role, may function as a sodium-dependent glucose transporter. Potential channels for urea in the inner medulla of kidney. In Mus musculus (Mouse), this protein is Sodium-dependent glucose transporter 1A.